The sequence spans 323 residues: Lipoyl synthase (323 aa).

Residues Cys65, Cys70, Cys76, Cys91, Cys95, Cys98, and Ser304 each contribute to the [4Fe-4S] cluster site. A Radical SAM core domain is found at 77–293 (FNNGTATFMI…KKEALSIGFT (217 aa)).

Belongs to the radical SAM superfamily. Lipoyl synthase family. Requires [4Fe-4S] cluster as cofactor.

The protein resides in the cytoplasm. It carries out the reaction [[Fe-S] cluster scaffold protein carrying a second [4Fe-4S](2+) cluster] + N(6)-octanoyl-L-lysyl-[protein] + 2 oxidized [2Fe-2S]-[ferredoxin] + 2 S-adenosyl-L-methionine + 4 H(+) = [[Fe-S] cluster scaffold protein] + N(6)-[(R)-dihydrolipoyl]-L-lysyl-[protein] + 4 Fe(3+) + 2 hydrogen sulfide + 2 5'-deoxyadenosine + 2 L-methionine + 2 reduced [2Fe-2S]-[ferredoxin]. It participates in protein modification; protein lipoylation via endogenous pathway; protein N(6)-(lipoyl)lysine from octanoyl-[acyl-carrier-protein]: step 2/2. In terms of biological role, catalyzes the radical-mediated insertion of two sulfur atoms into the C-6 and C-8 positions of the octanoyl moiety bound to the lipoyl domains of lipoate-dependent enzymes, thereby converting the octanoylated domains into lipoylated derivatives. This chain is Lipoyl synthase, found in Buchnera aphidicola subsp. Acyrthosiphon pisum (strain 5A).